A 1411-amino-acid polypeptide reads, in one-letter code: Protein three rows (1411 aa).

Positions 1065–1071 (VEPIRKQ) are separase cleavage-site. 3 disordered regions span residues 1221–1240 (LEPPSKPQNPRRALTFNISP), 1268–1301 (VRPASSTTSSSSSSSSSENASSPERKSTKSKSPK), and 1330–1411 (AKST…RHRN). Composition is skewed to low complexity over residues 1270–1289 (PASSTTSSSSSSSSSENASS) and 1386–1398 (TAEQPTTTTTATP).

In terms of assembly, interacts with pim and Sse. Cleavage of thr contributes to inactivation of Sse.

The protein resides in the cytoplasm. In terms of biological role, required specifically for chromosome disjunction during all mitoses; maternally provided protein is sufficient until mitosis 14 then zygotic protein is required. Involved in formation and/or maintenance of epithelial structures: bud extension during Malpighian tubule development, and foregut and hindgut morphogenesis. The chain is Protein three rows (thr) from Drosophila virilis (Fruit fly).